Consider the following 123-residue polypeptide: Small ribosomal subunit protein uS13 (123 aa).

The disordered stretch occupies residues P97 to K123.

It belongs to the universal ribosomal protein uS13 family. Part of the 30S ribosomal subunit. Forms a loose heterodimer with protein S19. Forms two bridges to the 50S subunit in the 70S ribosome.

Its function is as follows. Located at the top of the head of the 30S subunit, it contacts several helices of the 16S rRNA. In the 70S ribosome it contacts the 23S rRNA (bridge B1a) and protein L5 of the 50S subunit (bridge B1b), connecting the 2 subunits; these bridges are implicated in subunit movement. Contacts the tRNAs in the A and P-sites. The sequence is that of Small ribosomal subunit protein uS13 from Ehrlichia chaffeensis (strain ATCC CRL-10679 / Arkansas).